The following is a 206-amino-acid chain: Dephospho-CoA kinase (206 aa).

The 201-residue stretch at I6–K206 folds into the DPCK domain. A14–T19 serves as a coordination point for ATP.

It belongs to the CoaE family.

The protein resides in the cytoplasm. It catalyses the reaction 3'-dephospho-CoA + ATP = ADP + CoA + H(+). The protein operates within cofactor biosynthesis; coenzyme A biosynthesis; CoA from (R)-pantothenate: step 5/5. Its function is as follows. Catalyzes the phosphorylation of the 3'-hydroxyl group of dephosphocoenzyme A to form coenzyme A. In Carboxydothermus hydrogenoformans (strain ATCC BAA-161 / DSM 6008 / Z-2901), this protein is Dephospho-CoA kinase.